The sequence spans 249 residues: Coproheme decarboxylase (249 aa).

Fe-coproporphyrin III is bound by residues Arg131, 145-149 (YPMDK), His172, and Gln185. Tyr145 is a catalytic residue.

It belongs to the ChdC family. Type 1 subfamily. It depends on Fe-coproporphyrin III as a cofactor.

The catalysed reaction is Fe-coproporphyrin III + 2 H2O2 + 2 H(+) = heme b + 2 CO2 + 4 H2O. The enzyme catalyses Fe-coproporphyrin III + H2O2 + H(+) = harderoheme III + CO2 + 2 H2O. It carries out the reaction harderoheme III + H2O2 + H(+) = heme b + CO2 + 2 H2O. It functions in the pathway porphyrin-containing compound metabolism; protoheme biosynthesis. In terms of biological role, involved in coproporphyrin-dependent heme b biosynthesis. Catalyzes the decarboxylation of Fe-coproporphyrin III (coproheme) to heme b (protoheme IX), the last step of the pathway. The reaction occurs in a stepwise manner with a three-propionate intermediate. This chain is Coproheme decarboxylase, found in Staphylococcus epidermidis (strain ATCC 35984 / DSM 28319 / BCRC 17069 / CCUG 31568 / BM 3577 / RP62A).